The primary structure comprises 329 residues: Putative dehydrogenase RB0419 (329 aa).

This sequence belongs to the ornithine cyclodeaminase/mu-crystallin family.

The polypeptide is Putative dehydrogenase RB0419 (Rhizobium meliloti (strain 1021) (Ensifer meliloti)).